Consider the following 348-residue polypeptide: Sulfate/thiosulfate import ATP-binding protein CysA (348 aa).

The ABC transporter domain maps to 3-237; the sequence is IEVRNIVKEF…PASAFVHGFI (235 aa). ATP is bound at residue 35 to 42; it reads GPSGSGKT.

Belongs to the ABC transporter superfamily. Sulfate/tungstate importer (TC 3.A.1.6) family. In terms of assembly, the complex is composed of two ATP-binding proteins (CysA), two transmembrane proteins (CysT and CysW) and a solute-binding protein (CysP).

It is found in the cell inner membrane. The catalysed reaction is sulfate(out) + ATP + H2O = sulfate(in) + ADP + phosphate + H(+). It carries out the reaction thiosulfate(out) + ATP + H2O = thiosulfate(in) + ADP + phosphate + H(+). In terms of biological role, part of the ABC transporter complex CysAWTP involved in sulfate/thiosulfate import. Responsible for energy coupling to the transport system. The chain is Sulfate/thiosulfate import ATP-binding protein CysA from Rhodopseudomonas palustris (strain ATCC BAA-98 / CGA009).